The sequence spans 333 residues: Phosphate acyltransferase (333 aa).

Belongs to the PlsX family. As to quaternary structure, homodimer. Probably interacts with PlsY.

The protein localises to the cytoplasm. The enzyme catalyses a fatty acyl-[ACP] + phosphate = an acyl phosphate + holo-[ACP]. The protein operates within lipid metabolism; phospholipid metabolism. Functionally, catalyzes the reversible formation of acyl-phosphate (acyl-PO(4)) from acyl-[acyl-carrier-protein] (acyl-ACP). This enzyme utilizes acyl-ACP as fatty acyl donor, but not acyl-CoA. In Enterococcus faecalis (strain ATCC 700802 / V583), this protein is Phosphate acyltransferase.